Consider the following 350-residue polypeptide: MEKFQAAMVLGAVGDALGSRWQTCSSGSQIQQELRALGGLAALKLDAEHWPLSDGALMHMTTAEALITDYWCLEDLYRELVRLYVEAMVSLQGRVPEPSTVEGCANLKPHNFLLAWHTPFNEKGSGHGAATKAMCIGMRYWQPERLHTLVEVSIEAGRMTHNHPIGFLGSLCTALFASFAVQGRPLVSWGRELLKTLPKAEEYCRKTIRHMAEYQETWFYFEAKWQFYLEERGIEDGQSKPSFPERYDADETDRMYKRWSSEGCAGRRGHDAPMIAYDALLAAGSDWEELCRRAILHGGESSATGLISGCLFGLLHGLSAAPTGLHQDLDRREKLQDLGERLYRAAALEK.

It belongs to the ADP-ribosylglycohydrolase family.

Its subcellular location is the cytoplasm. It is found in the myofibril. The protein resides in the sarcomere. In terms of biological role, required for myofibril assembly and outgrowth of the cardiac chambers in the developing heart. Appears to be catalytically inactive, showing no activity against O-acetyl-ADP-ribose. This Danio rerio (Zebrafish) protein is Inactive ADP-ribosyltransferase arh2 (adprhl1).